A 372-amino-acid polypeptide reads, in one-letter code: Uroporphyrinogen decarboxylase (372 aa).

Residues 35–39, D85, Y166, S221, and H342 each bind substrate; that span reads RQAGR.

This sequence belongs to the uroporphyrinogen decarboxylase family. Homodimer.

The protein resides in the cytoplasm. The catalysed reaction is uroporphyrinogen III + 4 H(+) = coproporphyrinogen III + 4 CO2. It participates in porphyrin-containing compound metabolism; protoporphyrin-IX biosynthesis; coproporphyrinogen-III from 5-aminolevulinate: step 4/4. Catalyzes the decarboxylation of four acetate groups of uroporphyrinogen-III to yield coproporphyrinogen-III. This chain is Uroporphyrinogen decarboxylase, found in Methylibium petroleiphilum (strain ATCC BAA-1232 / LMG 22953 / PM1).